The primary structure comprises 138 residues: Acidic phospholipase A2 inhibitor vaspin A chain (138 aa).

A signal peptide spans 1-16; that stretch reads MRTLWIVAVCLIGVEG. 7 disulfide bridges follow: Cys-42/Cys-131, Cys-44/Cys-60, Cys-59/Cys-111, Cys-65/Cys-138, Cys-66/Cys-104, Cys-73/Cys-97, and Cys-91/Cys-102.

Belongs to the phospholipase A2 family. Group II subfamily. D49 sub-subfamily. In terms of assembly, heterodimer of a toxic basic protein having phospholipase A2 activity (B chain (AC Q8JFG0)) and a non-toxic acidic protein functioning as its inhibitor (A chain). As to expression, expressed by the venom gland.

The protein localises to the secreted. Functionally, heterodimer: postsynaptic neurotoxin. In terms of biological role, monomer: the acidic chain inhibits the basic phospholipase A2 of the complex. This Vipera aspis aspis (Aspic viper) protein is Acidic phospholipase A2 inhibitor vaspin A chain.